A 115-amino-acid polypeptide reads, in one-letter code: Promotilin (115 aa).

The N-terminal stretch at Met-1–Gly-25 is a signal peptide. Residues Arg-43–Gln-73 are disordered.

The protein belongs to the motilin family.

The protein localises to the secreted. Plays an important role in the regulation of interdigestive gastrointestinal motility and indirectly causes rhythmic contraction of duodenal and colonic smooth muscle. This Ovis aries (Sheep) protein is Promotilin (MLN).